A 179-amino-acid chain; its full sequence is Large ribosomal subunit protein uL5 (179 aa).

The protein belongs to the universal ribosomal protein uL5 family. Part of the 50S ribosomal subunit; part of the 5S rRNA/L5/L18/L25 subcomplex. Contacts the 5S rRNA and the P site tRNA. Forms a bridge to the 30S subunit in the 70S ribosome.

This is one of the proteins that bind and probably mediate the attachment of the 5S RNA into the large ribosomal subunit, where it forms part of the central protuberance. In the 70S ribosome it contacts protein S13 of the 30S subunit (bridge B1b), connecting the 2 subunits; this bridge is implicated in subunit movement. Contacts the P site tRNA; the 5S rRNA and some of its associated proteins might help stabilize positioning of ribosome-bound tRNAs. The sequence is that of Large ribosomal subunit protein uL5 from Pseudoalteromonas translucida (strain TAC 125).